The primary structure comprises 360 residues: Glycoprotein-N-acetylgalactosamine 3-beta-galactosyltransferase 1 (360 aa).

Topologically, residues 1–7 (MSIICAK) are cytoplasmic. The helical; Signal-anchor for type II membrane protein transmembrane segment at 8–28 (VAWLPLTLGTAMGFLITFYLA) threads the bilayer. The Lumenal segment spans residues 29 to 360 (RTLLERNSQP…SDFLEPPMES (332 aa)). Residues Cys79 and Cys103 are joined by a disulfide bond. UDP-binding residues include Met82, Glu126, Gly127, Arg128, and Lys134. Residue Asn148 is glycosylated (N-linked (GlcNAc...) asparagine). Residue Asp157 participates in UDP binding. Residues Asp157 and Asp159 each coordinate Mn(2+). The N-linked (GlcNAc...) asparagine glycan is linked to Asn173. Cys220 and Cys234 are joined by a disulfide. Trp274 serves as a coordination point for a glycoprotein. An intrachain disulfide couples Cys289 to Cys290. His298 and Tyr299 together coordinate UDP. Residue His298 participates in Mn(2+) binding. N-linked (GlcNAc...) asparagine glycans are attached at residues Asn341 and Asn347.

This sequence belongs to the glycosyltransferase 31 family. Beta3-Gal-T subfamily. In terms of assembly, homodimer; disulfide-linked. Mn(2+) serves as cofactor.

The protein resides in the membrane. It catalyses the reaction an N-acetyl-alpha-D-galactosaminyl derivative + UDP-alpha-D-galactose = a beta-D-galactosyl-(1-&gt;3)-N-acetyl-alpha-D-galactosaminyl derivative + UDP + H(+). The protein operates within protein modification; protein glycosylation. Its function is as follows. Glycosyltransferase that generates the core 1 O-glycan Gal-beta1-3GalNAc-alpha1-Ser/Thr (T antigen), which is a precursor for many extended O-glycans in glycoproteins. This chain is Glycoprotein-N-acetylgalactosamine 3-beta-galactosyltransferase 1 (c1galt1), found in Xenopus laevis (African clawed frog).